Consider the following 132-residue polypeptide: Interleukin-13 (132 aa).

The first 18 residues, 1 to 18 (MALLLTTVIALTCLGGFA), serve as a signal peptide directing secretion. 4 N-linked (GlcNAc...) asparagine glycosylation sites follow: asparagine 38, asparagine 49, asparagine 57, and asparagine 72. Cystine bridges form between cysteine 48/cysteine 76 and cysteine 64/cysteine 90.

The protein belongs to the IL-4/IL-13 family. As to quaternary structure, interacts with IL13RA2.

Its subcellular location is the secreted. Its function is as follows. Cytokine that plays important roles in allergic inflammation and immune response to parasite infection. Synergizes with IL2 in regulating interferon-gamma synthesis. Stimulates B-cell proliferation, and activation of eosinophils, basophils, and mast cells. Plays an important role in controlling IL33 activity by modulating the production of transmembrane and soluble forms of interleukin-1 receptor-like 1/IL1RL1. Displays the capacity to antagonize Th1-driven proinflammatory immune response and downregulates synthesis of many proinflammatory cytokines including IL1, IL6, IL10, IL12 and TNF-alpha through a mechanism that partially involves suppression of NF-kappa-B. Also functions on nonhematopoietic cells, including endothelial cells where it induces vascular cell adhesion protein 1/VCAM1, which is important in the recruitment of eosinophils. Exerts its biological effects through its receptors which comprises the IL4R chain and the IL13RA1 chain, to activate JAK1 and TYK2, leading to the activation of STAT6. Aside from IL13RA1, another receptor IL13RA2 acts as a high affinity decoy for IL13 and mediates internalization and depletion of extracellular IL13. This Pan troglodytes (Chimpanzee) protein is Interleukin-13 (IL13).